A 501-amino-acid chain; its full sequence is Lysine--tRNA ligase (501 aa).

The Mg(2+) site is built by Glu411 and Glu418.

It belongs to the class-II aminoacyl-tRNA synthetase family. As to quaternary structure, homodimer. Mg(2+) is required as a cofactor.

It localises to the cytoplasm. The catalysed reaction is tRNA(Lys) + L-lysine + ATP = L-lysyl-tRNA(Lys) + AMP + diphosphate. The sequence is that of Lysine--tRNA ligase from Magnetococcus marinus (strain ATCC BAA-1437 / JCM 17883 / MC-1).